The primary structure comprises 800 residues: Ion-translocating oxidoreductase complex subunit C (800 aa).

4Fe-4S ferredoxin-type domains are found at residues 367-398 (DEFS…QQLY) and 408-437 (KARG…VQYY). Positions 378, 381, 384, 388, 417, 420, 423, and 427 each coordinate [4Fe-4S] cluster. 5 stretches are compositionally biased toward low complexity: residues 536-553 (GATP…APAP), 571-583 (AKQA…PAAT), 599-617 (AAIA…APAA), 647-667 (AKQA…ADPA), and 675-690 (AAIA…KQAA). Disordered regions lie at residues 536–558 (GATP…DDPR), 571–631 (AKQA…QDDP), and 647–706 (AKQA…ENTD). Polar residues predominate over residues 693–705 (HATTEPVTVQENT).

Belongs to the 4Fe4S bacterial-type ferredoxin family. RnfC subfamily. As to quaternary structure, the complex is composed of six subunits: RnfA, RnfB, RnfC, RnfD, RnfE and RnfG. Requires [4Fe-4S] cluster as cofactor.

Its subcellular location is the cell inner membrane. Part of a membrane-bound complex that couples electron transfer with translocation of ions across the membrane. This chain is Ion-translocating oxidoreductase complex subunit C, found in Edwardsiella ictaluri (strain 93-146).